The sequence spans 517 residues: 2,4,6-trichlorophenol monooxygenase (517 aa).

Belongs to the FADH(2)-utilizing monooxygenase family. In terms of assembly, homotetramer in solution.

It catalyses the reaction 2,4,6-trichlorophenol + FADH2 + O2 = 2-chloro-6-hydroxy-1,4-benzoquinone + FAD + 2 chloride + 3 H(+). It carries out the reaction 2,4,6-trichlorophenol + FADH2 + O2 = 2,6-dichlorobenzoquinone + FAD + chloride + H2O + H(+). The catalysed reaction is 2,6-dichlorobenzoquinone + H2O = 2-chloro-6-hydroxy-1,4-benzoquinone + chloride + 2 H(+). It participates in aromatic compound metabolism. The protein operates within xenobiotic degradation. Involved in the degradation of 2,4,6-trichlorophenol (2,4,6-TCP). Catalyzes the conversion of 2,4,6-TCP to 6-chlorohydroxyquinol (6-CHQ). The monooxygenase oxidizes 2,4,6-TCP to 2,6-dichloroquinone (2,6-DCBQ), which remains with the enzyme and is hydrolyzed to 2-chlorohydroxyquinone. 2-chlorohydroxyquinone is chemically reduced by ascorbate and NADH to 6-chlorohydroxyquinol (6-CHQ). The polypeptide is 2,4,6-trichlorophenol monooxygenase (Cupriavidus pinatubonensis (strain JMP 134 / LMG 1197) (Cupriavidus necator (strain JMP 134))).